The sequence spans 120 residues: Ig heavy chain V region AC38 15.3 (120 aa).

Positions 1-98 (QVQLLQPGTE…EDSAVYYCAR (98 aa)) are v segment. The cysteines at positions 22 and 96 are disulfide-linked. Residues 99–105 (WDYEGDR) form a d segment region. Positions 106–120 (YFDVWGTGTTVTVSS) are j segment.

This chain is Ig heavy chain V region AC38 15.3, found in Mus musculus (Mouse).